The chain runs to 214 residues: Ribosomal RNA small subunit methyltransferase G (214 aa).

S-adenosyl-L-methionine-binding positions include G56, F61, 107–108 (IE), and R125.

The protein belongs to the methyltransferase superfamily. RNA methyltransferase RsmG family.

The protein localises to the cytoplasm. In terms of biological role, specifically methylates the N7 position of a guanine in 16S rRNA. This Syntrophomonas wolfei subsp. wolfei (strain DSM 2245B / Goettingen) protein is Ribosomal RNA small subunit methyltransferase G.